Reading from the N-terminus, the 210-residue chain is Adenylate kinase (210 aa).

Residue 10–15 participates in ATP binding; the sequence is GSGKGT. Residues 30–54 form an NMP region; that stretch reads SCGDILRKQNKCCDINKLIKKGELI. AMP is bound by residues Arg-36, 52–54, 80–83, and Gln-87; these read ELI and GFPR. The LID stretch occupies residues 117–154; sequence GRIIDKVSGEIYHLKFNPPKFITEKSNKNKILVRRLDD. Residues Arg-118 and 127-128 contribute to the ATP site; that span reads IY. AMP contacts are provided by Arg-151 and Arg-162. ATP is bound at residue Phe-195.

The protein belongs to the adenylate kinase family. As to quaternary structure, monomer.

Its subcellular location is the cytoplasm. It catalyses the reaction AMP + ATP = 2 ADP. It participates in purine metabolism; AMP biosynthesis via salvage pathway; AMP from ADP: step 1/1. Functionally, catalyzes the reversible transfer of the terminal phosphate group between ATP and AMP. Plays an important role in cellular energy homeostasis and in adenine nucleotide metabolism. This Wigglesworthia glossinidia brevipalpis protein is Adenylate kinase.